A 548-amino-acid chain; its full sequence is Probable delta-1-pyrroline-5-carboxylate dehydrogenase (548 aa).

Residue glutamate 298 is the Proton acceptor of the active site. The Nucleophile role is filled by cysteine 332. Residues serine 391, serine 394, and serine 396 each carry the phosphoserine modification.

This sequence belongs to the aldehyde dehydrogenase family.

The catalysed reaction is L-glutamate 5-semialdehyde + NAD(+) + H2O = L-glutamate + NADH + 2 H(+). It functions in the pathway amino-acid degradation; L-proline degradation into L-glutamate; L-glutamate from L-proline: step 2/2. The sequence is that of Probable delta-1-pyrroline-5-carboxylate dehydrogenase from Schizosaccharomyces pombe (strain 972 / ATCC 24843) (Fission yeast).